The chain runs to 119 residues: Non-specific lipid-transfer protein 3 (119 aa).

The signal sequence occupies residues Met-1–Ala-24. 4 disulfide bridges follow: Cys-28/Cys-77, Cys-38/Cys-54, Cys-55/Cys-100, and Cys-75/Cys-114.

Belongs to the plant LTP family. In terms of tissue distribution, expressed in roots, stem, leaves and tendrils of the mature plant.

In terms of biological role, plant non-specific lipid-transfer proteins transfer phospholipids as well as galactolipids across membranes. May play a role in wax or cutin deposition in the cell walls of expanding epidermal cells and certain secretory tissues. This is Non-specific lipid-transfer protein 3 from Pisum sativum (Garden pea).